A 780-amino-acid polypeptide reads, in one-letter code: E3 SUMO-protein ligase gei-17 (780 aa).

The disordered stretch occupies residues 181-210 (APLHSSFPNHGRSSQQSLQKSEKSNRPKKM). The PINIT domain occupies 203-367 (KSNRPKKMYA…AAGVYFVHRV (165 aa)). Residues 400 to 485 (GEDDIAMDRL…LAKVDKNTTE (86 aa)) form an SP-RING-type zinc finger. Zn(2+)-binding residues include C431, H433, C454, and C457. A compositionally biased stretch (polar residues) spans 519 to 530 (GTASCSSTNGNG). 3 disordered regions span residues 519 to 544 (GTAS…ADDD), 560 to 594 (IMNS…KTKD), and 732 to 755 (QQHH…SFYA). Over residues 732 to 749 (QQHHLQQQQQQQQSPQIM) the composition is skewed to low complexity.

The protein belongs to the PIAS family. As to quaternary structure, may interact with gex-3.

Its pathway is protein modification; protein sumoylation. Its function is as follows. Functions as an E3-type smo-1 ligase. Mediates smo-1 conjugation to air-2 in vitro and is required for proper chromosome alignment. In the early embryo, specifically suppresses checkpoint activation in response to DNA damage, maybe by promoting mus-101 sumoylation. In embryos, plays a role in determining telomere localization in the nucleus. Acts with pie-1 to promote piRNA-mediated silencing and fertility in the adult germline. The protein is E3 SUMO-protein ligase gei-17 of Caenorhabditis elegans.